Here is a 256-residue protein sequence, read N- to C-terminus: 1-(5-phosphoribosyl)-5-[(5-phosphoribosylamino)methylideneamino] imidazole-4-carboxamide isomerase (256 aa).

Catalysis depends on D8, which acts as the Proton acceptor. The active-site Proton donor is the D129.

Belongs to the HisA/HisF family.

The protein localises to the cytoplasm. The enzyme catalyses 1-(5-phospho-beta-D-ribosyl)-5-[(5-phospho-beta-D-ribosylamino)methylideneamino]imidazole-4-carboxamide = 5-[(5-phospho-1-deoxy-D-ribulos-1-ylimino)methylamino]-1-(5-phospho-beta-D-ribosyl)imidazole-4-carboxamide. Its pathway is amino-acid biosynthesis; L-histidine biosynthesis; L-histidine from 5-phospho-alpha-D-ribose 1-diphosphate: step 4/9. This is 1-(5-phosphoribosyl)-5-[(5-phosphoribosylamino)methylideneamino] imidazole-4-carboxamide isomerase from Syntrophobacter fumaroxidans (strain DSM 10017 / MPOB).